A 92-amino-acid polypeptide reads, in one-letter code: Sec-independent protein translocase protein TatA (92 aa).

A helical transmembrane segment spans residues 1–21 (MGIFDWKHWIVILVVVVLVFG). Residues 44–92 (NDDEKPADPVVNPVPPAQPVHPQATQPITERRTFDVQAEKVEEPTRKDS) form a disordered region. Positions 72–92 (TERRTFDVQAEKVEEPTRKDS) are enriched in basic and acidic residues.

Belongs to the TatA/E family. In terms of assembly, the Tat system comprises two distinct complexes: a TatABC complex, containing multiple copies of TatA, TatB and TatC subunits, and a separate TatA complex, containing only TatA subunits. Substrates initially bind to the TatABC complex, which probably triggers association of the separate TatA complex to form the active translocon.

Its subcellular location is the cell inner membrane. Part of the twin-arginine translocation (Tat) system that transports large folded proteins containing a characteristic twin-arginine motif in their signal peptide across membranes. TatA could form the protein-conducting channel of the Tat system. This chain is Sec-independent protein translocase protein TatA, found in Pseudomonas fluorescens (strain SBW25).